Here is an 89-residue protein sequence, read N- to C-terminus: Small ribosomal subunit protein uS15 (89 aa).

It belongs to the universal ribosomal protein uS15 family. As to quaternary structure, part of the 30S ribosomal subunit. Forms a bridge to the 50S subunit in the 70S ribosome, contacting the 23S rRNA.

Functionally, one of the primary rRNA binding proteins, it binds directly to 16S rRNA where it helps nucleate assembly of the platform of the 30S subunit by binding and bridging several RNA helices of the 16S rRNA. In terms of biological role, forms an intersubunit bridge (bridge B4) with the 23S rRNA of the 50S subunit in the ribosome. This Beijerinckia indica subsp. indica (strain ATCC 9039 / DSM 1715 / NCIMB 8712) protein is Small ribosomal subunit protein uS15.